A 279-amino-acid polypeptide reads, in one-letter code: Cyanocobalamin reductase / alkylcobalamin dealkylase (279 aa).

Substrate-binding positions include aspartate 104, 115-118 (ILAQ), 129-131 (YYQ), cysteine 149, and isoleucine 160. Residues 239-279 (PSEHPSTTSELPLSLLTKPQNSRRARSWLSPSVSPPVSPGP) form a disordered region. Low complexity predominate over residues 243–257 (PSTTSELPLSLLTKP). 3 positions are modified to phosphoserine: serine 247, serine 272, and serine 276.

This sequence belongs to the MMACHC family. In terms of assembly, monomer in the absence of bound substrate. Homodimer; dimerization is triggered by binding to FMN or adenosylcobalamin. Interacts with LMBRD1 and ABCD4; the interaction ensures the transport of cobalamin from the lysosome to the cytoplasm. Forms a multiprotein complex with MMADHC, MTR and MTRR; the interaction with MTR could modulate MMACHC-dependent processing of cobalamin. Heterodimer with MMADHC; the interaction might play a role in the regulation of the balance between AdoCbl and MeCbl synthesis. The cofactor is FAD. It depends on FMN as a cofactor. As to expression, detected in liver and kidney (at protein level). Detected in embryos.

The protein localises to the cytoplasm. It is found in the cytosol. It carries out the reaction 2 cob(II)alamin-[cyanocobalamin reductase] + 2 hydrogen cyanide + NADP(+) = 2 cyanocob(III)alamin + 2 apo-[cyanocobalamin reductase] + NADPH + H(+). It catalyses the reaction apo-[alkylcobalamin reductase] + an R-cob(III)alamin + glutathione = cob(I)alamin-[alkylcobalamin reductase] + an S-substituted glutathione + H(+). The catalysed reaction is apo-[alkylcobalamin reductase] + methylcob(III)alamin + glutathione = S-methyl glutathione + cob(I)alamin-[alkylcobalamin reductase] + H(+). The enzyme catalyses apo-[alkylcobalamin reductase] + adenosylcob(III)alamin + glutathione = S-adenosylglutathione + cob(I)alamin-[alkylcobalamin reductase] + H(+). Its function is as follows. Cobalamin (vitamin B12) cytosolic chaperone that catalyzes the reductive decyanation of cyanocob(III)alamin (cyanocobalamin, CNCbl) to yield cob(II)alamin and cyanide, using FAD or FMN as cofactors and NADPH as cosubstrate. Cyanocobalamin constitutes the inactive form of vitamin B12 introduced from the diet, and is converted into the active cofactors methylcobalamin (MeCbl) involved in methionine biosynthesis, and 5'-deoxyadenosylcobalamin (AdoCbl) involved in the TCA cycle. Forms a complex with the lysosomal transporter ABCD4 and its chaperone LMBRD1, to transport cobalamin across the lysosomal membrane into the cytosol. The processing of cobalamin in the cytosol occurs in a multiprotein complex composed of at least MMACHC, MMADHC, MTRR (methionine synthase reductase) and MTR (methionine synthase) which may contribute to shuttle safely and efficiently cobalamin towards MTR in order to produce methionine. Also acts as a glutathione transferase by catalyzing the dealkylation of the alkylcob(III)alamins MeCbl and AdoCbl, using the thiolate of glutathione for nucleophilic displacement to generate cob(I)alamin and the corresponding glutathione thioether. The conversion of incoming MeCbl or AdoCbl into a common intermediate cob(I)alamin is necessary to meet the cellular needs for both cofactors. Cysteine and homocysteine cannot substitute for glutathione in this reaction. This chain is Cyanocobalamin reductase / alkylcobalamin dealkylase, found in Mus musculus (Mouse).